Here is a 252-residue protein sequence, read N- to C-terminus: Mitochondrial cardiolipin hydrolase (252 aa).

The Mitochondrial intermembrane segment spans residues 1 to 4 (MGRL). A required for mitochondrial localization region spans residues 1–39 (MGRLSWQVAAAAAVGLALTLEALPWVLRWLRSRRRRPRR). The helical transmembrane segment at 5 to 27 (SWQVAAAAAVGLALTLEALPWVL) threads the bilayer. The Cytoplasmic segment spans residues 28–252 (RWLRSRRRRP…TCGTSSESQT (225 aa)). Residues 45–78 (PSQVTCTEALLRAPGAELAELPEGCPCGLPHGES) form a C3H1-type; atypical zinc finger. Residues 151–178 (DPGYMHHKFAIVDKRVLITGSLNWTTQA) enclose the PLD phosphodiesterase domain. Residues His156, Lys158, and Asp163 contribute to the active site.

Belongs to the phospholipase D family. MitoPLD/Zucchini subfamily. Homodimer. Interacts with MOV10L1. Interacts with MIGA1 and MIGA2; possibly facilitating homodimer formation. Interacts with GK2. As to expression, predominantly expressed in testis and ovary, but not limited to gonads (at protein level). It is also found in brain, heart, pituitary gland, prostate, pancreas, thyroid, bone marrow, lung and muscle.

The protein localises to the mitochondrion outer membrane. The protein resides in the golgi apparatus. The enzyme catalyses a cardiolipin + H2O = a 1,2-diacyl-sn-glycero-3-phospho-(1'-sn-glycerol) + a 1,2-diacyl-sn-glycero-3-phosphate + H(+). MYC stimulates its phospholipase activity. MIGA1 and MIGA2 increase PLD6 self-association affinity and affects the homodimer conformation facilitating its phospholipase activity over the nuclease activity. Single stranded DNA (ssDNA) hydrolase activity does not depend upon, but is stimulated by the presence of Ca(2+) and Mn(2+). In terms of biological role, presents phospholipase and nuclease activities, depending on the different physiological conditions. Interaction with Mitoguardin (MIGA1 or MIGA2) affects the dimer conformation, facilitating the lipase activity over the nuclease activity. Plays a key role in mitochondrial fusion and fission via its phospholipase activity. In its phospholipase role, it uses the mitochondrial lipid cardiolipin as substrate to generate phosphatidate (PA or 1,2-diacyl-sn-glycero-3-phosphate), a second messenger signaling lipid. Production of PA facilitates Mitofusin-mediated fusion, whereas the cleavage of PA by the Lipin family of phosphatases produces diacylgycerol (DAG) which promotes mitochondrial fission. Both Lipin and DAG regulate mitochondrial dynamics and membrane fusion/fission, important processes for adapting mitochondrial metabolism to changes in cell physiology. Mitochondrial fusion enables cells to cope with the increased nucleotide demand during DNA synthesis. Mitochondrial function and dynamics are closely associated with biological processes such as cell growth, proliferation, and differentiation. Mediator of MYC activity, promotes mitochondrial fusion and activates AMPK which in turn inhibits YAP/TAZ, thereby inducing cell growth and proliferation. The endonuclease activity plays a critical role in PIWI-interacting RNA (piRNA) biogenesis during spermatogenesis. Implicated in spermatogenesis and sperm fertility in testicular germ cells, its single strand-specific nuclease activity is critical for the biogenesis/maturation of PIWI-interacting RNA (piRNA). MOV10L1 selectively binds to piRNA precursors and funnels them to the endonuclease that catalyzes the first cleavage step of piRNA processing to generate piRNA intermediate fragments that are subsequently loaded to Piwi proteins. Cleaves either DNA or RNA substrates with similar affinity, producing a 5' phosphate end, in this way it participates in the processing of primary piRNA transcripts. piRNAs provide essential protection against the activity of mobile genetic elements. piRNA-mediated transposon silencing is thus critical for maintaining genome stability, in particular in germline cells when transposons are mobilized as a consequence of wide-spread genomic demethylation. PA may act as signaling molecule in the recognition/transport of the precursor RNAs of primary piRNAs. Interacts with tesmin in testes, suggesting a role in spermatogenesis via association with its interacting partner. This Homo sapiens (Human) protein is Mitochondrial cardiolipin hydrolase (PLD6).